The chain runs to 623 residues: MAPKVTSELLRQLRQAMRNSECVAEPIQAYIIPSGDAHQSEYIAPCDCRRAFVSGFDGSAGTAIITEEHAAMWTDGRYFLQAAKQMDNNWTLMKMGLKDTPTQEDWLVSVLPEGSRVGVDPLIIPTDYWKKMAKVLRSAGHHLVPVKENLVDKIWTDRPERPCKPLLTLGLDYTGISWKEKVADLRLKMAERSIVWFVVTALDEIAWLFNLRGSDVEHNPVFFSYAIIGLERIMLFIDGDRIDAPGVKQHLLLDLGLEAEYKIQVLPYKSILSELKTLCADLSPREKVWVSDKASYAVSEAIPKDHRCCMPYTPICIAKAVKNSAESAGMRRAHIKDAVALCELFNWLEQEVPKGGVTEISAADKAEEFRRQQADFVDLSFPTISSTGPNGAIIHYAPIPETNRTLSLDEVYLIDSGAQYKDGTTDVTRTMHFGTPTAYEKECFTYVLKGHIAVSAAVFPTGTKGHLLDSFARSALWDSGLDYLHGTGHGVGSFLNVHEGPCGISYKTFSDEPLEAGMIVTDEPGYYEDGAFGIRIENVVLVVPAKTKYNFNNRGSLTFEPLTLVPIQTKMIDVDALTDKECDWLNSYHQTCRDVIGKELQTQGRQEALEWLLRETEPISRQH.

Arginine 77 contributes to the a peptide binding site. Lysine 304 bears the N6-acetyllysine mark. Residue histidine 395 coordinates a peptide. 3 residues coordinate Mn(2+): aspartate 415, aspartate 426, and histidine 489. Residues histidine 489, histidine 498, and glutamate 523 each coordinate a peptide. Residues glutamate 523 and glutamate 537 each coordinate Mn(2+).

This sequence belongs to the peptidase M24B family. Homodimer. Requires Mn(2+) as cofactor. Expressed in all tissues tested, including liver, adrenal decapsular tissue, adrenal capsular tissue, corpus luteum, testis, submandibular gland, thymus, brain, cerebellum and heart. Highest levels in testis.

It localises to the cytoplasm. The enzyme catalyses Release of any N-terminal amino acid, including proline, that is linked to proline, even from a dipeptide or tripeptide.. With respect to regulation, inhibited by inositol hexakisphosphate. In terms of biological role, metalloaminopeptidase that catalyzes the removal of a penultimate prolyl residue from the N-termini of peptides, such as Arg-Pro-Pro. Contributes to the degradation of bradykinin. The chain is Xaa-Pro aminopeptidase 1 from Rattus norvegicus (Rat).